We begin with the raw amino-acid sequence, 25 residues long: Insulin mimetic protein (25 aa).

The disordered stretch occupies residues 1–25; that stretch reads TKDPELKQCKKQQKKQQQYDDDDKK.

Glycosylated. In terms of tissue distribution, expressed in seed.

The sequence is that of Insulin mimetic protein from Cnidoscolus quercifolius.